The sequence spans 363 residues: 5-formaminoimidazole-4-carboxamide-1-(beta)-D-ribofuranosyl 5'-monophosphate synthetase (363 aa).

5-amino-1-(5-phospho-beta-D-ribosyl)imidazole-4-carboxamide contacts are provided by histidine 29 and serine 96. Residues arginine 118–lysine 354 enclose the ATP-grasp domain. ATP contacts are provided by residues proline 148 to cysteine 210 and glutamate 232. 5-amino-1-(5-phospho-beta-D-ribosyl)imidazole-4-carboxamide is bound at residue asparagine 260. The Mg(2+) site is built by glutamine 299 and glutamate 312.

This sequence belongs to the phosphohexose mutase family. Mg(2+) serves as cofactor. Requires Mn(2+) as cofactor.

It carries out the reaction 5-amino-1-(5-phospho-beta-D-ribosyl)imidazole-4-carboxamide + formate + ATP = 5-formamido-1-(5-phospho-D-ribosyl)imidazole-4-carboxamide + ADP + phosphate. It participates in purine metabolism; IMP biosynthesis via de novo pathway; 5-formamido-1-(5-phospho-D-ribosyl)imidazole-4-carboxamide from 5-amino-1-(5-phospho-D-ribosyl)imidazole-4-carboxamide (formate route): step 1/1. Functionally, catalyzes the ATP- and formate-dependent formylation of 5-aminoimidazole-4-carboxamide-1-beta-d-ribofuranosyl 5'-monophosphate (AICAR) to 5-formaminoimidazole-4-carboxamide-1-beta-d-ribofuranosyl 5'-monophosphate (FAICAR) in the absence of folates. In Methanobrevibacter smithii (strain ATCC 35061 / DSM 861 / OCM 144 / PS), this protein is 5-formaminoimidazole-4-carboxamide-1-(beta)-D-ribofuranosyl 5'-monophosphate synthetase.